The following is a 251-amino-acid chain: Triosephosphate isomerase (251 aa).

9–11 (NWK) contributes to the substrate binding site. The active-site Electrophile is the histidine 95. Residue glutamate 167 is the Proton acceptor of the active site. Substrate contacts are provided by residues glycine 173, serine 213, and 234–235 (GG).

This sequence belongs to the triosephosphate isomerase family. In terms of assembly, homodimer.

It localises to the cytoplasm. The enzyme catalyses D-glyceraldehyde 3-phosphate = dihydroxyacetone phosphate. It participates in carbohydrate biosynthesis; gluconeogenesis. It functions in the pathway carbohydrate degradation; glycolysis; D-glyceraldehyde 3-phosphate from glycerone phosphate: step 1/1. Functionally, involved in the gluconeogenesis. Catalyzes stereospecifically the conversion of dihydroxyacetone phosphate (DHAP) to D-glyceraldehyde-3-phosphate (G3P). The sequence is that of Triosephosphate isomerase from Lactobacillus gasseri (strain ATCC 33323 / DSM 20243 / BCRC 14619 / CIP 102991 / JCM 1131 / KCTC 3163 / NCIMB 11718 / NCTC 13722 / AM63).